The following is a 171-amino-acid chain: Ribosome maturation factor RimP (171 aa).

It belongs to the RimP family.

It is found in the cytoplasm. Required for maturation of 30S ribosomal subunits. The protein is Ribosome maturation factor RimP of Anaeromyxobacter dehalogenans (strain 2CP-1 / ATCC BAA-258).